We begin with the raw amino-acid sequence, 877 residues long: Dynamin (877 aa).

In terms of domain architecture, Dynamin-type G spans 23–289; sequence QLDLPQIAVV…LTNHIRDTLP (267 aa). Residues 33–40 are G1 motif; it reads GGQSAGKS. Residue 33–41 participates in GTP binding; the sequence is GGQSAGKSS. The G2 motif stretch occupies residues 59–61; the sequence is VTR. Residues 131–134 form a G3 motif region; the sequence is DLPG. A G4 motif region spans residues 200–203; sequence TKLD. Residues 200–206 and 231–234 each bind GTP; these read TKLDLMD and NRSQ. The G5 motif stretch occupies residues 230–233; sequence VNRS. One can recognise a PH domain in the interval 513 to 621; that stretch reads QVIRKGHMVI…WKASFLRAGV (109 aa). 2 disordered regions span residues 623–648 and 740–834; these read PEKQ…QLER and TVSS…SGAV. A compositionally biased stretch (acidic residues) spans 630–641; the sequence is ENGDESASEESS. The region spanning 650–741 is the GED domain; sequence VETIRNLVDS…IIGDVSMATV (92 aa). 3 positions are modified to phosphoserine: S756, S764, and S767. Positions 788–826 are enriched in pro residues; it reads PPLPPSTGRPAPAIPNRPGGGAPPLPGGRPGGSLPPPML.

This sequence belongs to the TRAFAC class dynamin-like GTPase superfamily. Dynamin/Fzo/YdjA family.

The protein resides in the cytoplasm. Its subcellular location is the cytoskeleton. It catalyses the reaction GTP + H2O = GDP + phosphate + H(+). Microtubule-associated force-producing protein which is involved in the production of microtubule bundles and which is able to bind and hydrolyze GTP. Implicated in endocytic protein sorting. This is Dynamin (shi) from Drosophila melanogaster (Fruit fly).